Consider the following 590-residue polypeptide: Aspartate--tRNA(Asp/Asn) ligase (590 aa).

Glu-172 contributes to the L-aspartate binding site. Residues 196-199 (QLFK) are aspartate. Arg-218 is an L-aspartate binding site. ATP contacts are provided by residues 218 to 220 (RDE) and Gln-227. Position 449 (His-449) interacts with L-aspartate. Glu-484 provides a ligand contact to ATP. Arg-491 is an L-aspartate binding site. 536 to 539 (GVDR) provides a ligand contact to ATP.

This sequence belongs to the class-II aminoacyl-tRNA synthetase family. Type 1 subfamily. Homodimer.

It localises to the cytoplasm. It catalyses the reaction tRNA(Asx) + L-aspartate + ATP = L-aspartyl-tRNA(Asx) + AMP + diphosphate. Aspartyl-tRNA synthetase with relaxed tRNA specificity since it is able to aspartylate not only its cognate tRNA(Asp) but also tRNA(Asn). Reaction proceeds in two steps: L-aspartate is first activated by ATP to form Asp-AMP and then transferred to the acceptor end of tRNA(Asp/Asn). The sequence is that of Aspartate--tRNA(Asp/Asn) ligase from Francisella tularensis subsp. holarctica (strain FTNF002-00 / FTA).